The chain runs to 493 residues: DM7 family protein GM11958 (493 aa).

The interval 434-493 is disordered; it reads ATKSTDTRDDGMNTADYQSQFPELEQDSEPEPEPEPEPQTEDEGEDEDIEILASLCSGSI. The segment covering 457–483 has biased composition (acidic residues); the sequence is LEQDSEPEPEPEPEPQTEDEGEDEDIE.

Belongs to the DM7 family.

This chain is DM7 family protein GM11958, found in Drosophila sechellia (Fruit fly).